The following is a 234-amino-acid chain: Glutamine synthetase (234 aa).

Residues 1-234 (KAQEPWFGIE…TRLLVETTLL (234 aa)) form the GS catalytic domain. Residues 126-157 (GSGGHVNFSNRQPESPPAGKQSRSSAKKLGKR) form a disordered region.

Belongs to the glutamine synthetase family. As to quaternary structure, homooctamer.

The protein localises to the cytoplasm. The enzyme catalyses L-glutamate + NH4(+) + ATP = L-glutamine + ADP + phosphate + H(+). The protein is Glutamine synthetase of Dunaliella salina (Green alga).